A 155-amino-acid polypeptide reads, in one-letter code: Fibroblast growth factor 1 (155 aa).

Ala-2 is modified (N-acetylalanine). The propeptide occupies 2-15 (AEGEITTFAALTER). Position 33 (Asn-33) interacts with heparin. The interval 127–143 (KKNGSCKRGPRTHYGQK) is heparin-binding.

It belongs to the heparin-binding growth factors family. As to quaternary structure, monomer. Homodimer. Interacts with FGFR1, FGFR2, FGFR3 and FGFR4. Affinity between fibroblast growth factors (FGFs) and their receptors is increased by heparan sulfate glycosaminoglycans that function as coreceptors. Found in a complex with FGFBP1, FGF1 and FGF2. Interacts with FGFBP1. Part of a Cu(2+)-dependent multiprotein aggregate containing FGF1, S100A13 and SYT1. Interacts with SYT1. Interacts with S100A13. Interacts with LRRC59. Interacts with CSNKA, CSNKB and FIBP. While binding with LRRC59, CSNKA and FIBP seem mutually exclusive, CSNKB and FIBP may cooperatively interact with FGF1. Forms a ternary complex with FGFR1 and ITGAV:ITGB3 and induces the recruitment of PTPN11 to the complex. In terms of processing, in the nucleus, phosphorylated by PKC/PRKCD.

It localises to the secreted. It is found in the cytoplasm. The protein localises to the cell cortex. Its subcellular location is the cytosol. The protein resides in the nucleus. Functionally, plays an important role in the regulation of cell survival, cell division, angiogenesis, cell differentiation and cell migration. Functions as a potent mitogen in vitro. Acts as a ligand for FGFR1 and integrins. Binds to FGFR1 in the presence of heparin leading to FGFR1 dimerization and activation via sequential autophosphorylation on tyrosine residues which act as docking sites for interacting proteins, leading to the activation of several signaling cascades. Binds to integrin ITGAV:ITGB3. Its binding to integrin, subsequent ternary complex formation with integrin and FGFR1, and the recruitment of PTPN11 to the complex are essential for FGF1 signaling. Induces the phosphorylation and activation of FGFR1, FRS2, MAPK3/ERK1, MAPK1/ERK2 and AKT1. Can induce angiogenesis. The polypeptide is Fibroblast growth factor 1 (Fgf1) (Mus musculus (Mouse)).